The following is a 138-amino-acid chain: FUN14 domain-containing protein fndc-1 (138 aa).

The next 2 helical transmembrane spans lie at 37 to 56 (PMVQ…YFVT) and 61 to 78 (LVAA…FAIH). Asn85 and Asn111 each carry an N-linked (GlcNAc...) asparagine glycan.

It belongs to the FUN14 family. Broadly expressed in somatic tissues. Expressed in the hermaphrodite spermatheca and male gonad. Expressed in spermatids, but not expressed in oocytes.

Its subcellular location is the mitochondrion outer membrane. In terms of biological role, mitophagy receptor which plays a role in paternal mitochondria degradation in embryos after the two-cell stage. The chain is FUN14 domain-containing protein fndc-1 from Caenorhabditis elegans.